We begin with the raw amino-acid sequence, 359 residues long: Glycerol-3-phosphate dehydrogenase [NAD(P)+] (359 aa).

NADPH contacts are provided by Thr11, Trp12, Arg32, and Lys107. Sn-glycerol 3-phosphate is bound by residues Lys107 and Gly138. Residue Ala142 participates in NADPH binding. Lys193, Asp246, Ser256, Arg257, and Asn258 together coordinate sn-glycerol 3-phosphate. The active-site Proton acceptor is the Lys193. Residue Arg257 coordinates NADPH. The NADPH site is built by Val281 and Glu283.

It belongs to the NAD-dependent glycerol-3-phosphate dehydrogenase family.

The protein localises to the cytoplasm. The enzyme catalyses sn-glycerol 3-phosphate + NAD(+) = dihydroxyacetone phosphate + NADH + H(+). It carries out the reaction sn-glycerol 3-phosphate + NADP(+) = dihydroxyacetone phosphate + NADPH + H(+). It functions in the pathway membrane lipid metabolism; glycerophospholipid metabolism. In terms of biological role, catalyzes the reduction of the glycolytic intermediate dihydroxyacetone phosphate (DHAP) to sn-glycerol 3-phosphate (G3P), the key precursor for phospholipid synthesis. This chain is Glycerol-3-phosphate dehydrogenase [NAD(P)+], found in Dehalococcoides mccartyi (strain CBDB1).